The chain runs to 443 residues: Zinc finger protein ZIC 1 (443 aa).

Residues 221–256 (LICKWIEPEQLANPKKSCNKTFSTMHELVTHVTVEH) form a C2H2-type 1; atypical zinc finger. The C2H2-type 2; atypical zinc-finger motif lies at 265–292 (HICVWEECPREGKPFKAKYKLINHIRVH). 3 C2H2-type zinc fingers span residues 298–322 (FPCP…KRTH), 328–352 (FKCE…MHVH), and 358–380 (YLCK…MKVH). The segment at 371-433 (SSLRKHMKVH…AVHHTSNHST (63 aa)) is disordered. Positions 383 to 396 (SSQGSQPSPAASSG) are enriched in low complexity. Over residues 397–413 (YESSTPPTIVSPSAENQ) the composition is skewed to polar residues. The negatively regulates transcriptional activity stretch occupies residues 408–443 (PSAENQSTSSLSPSSSAVHHTSNHSTLSSNFNEWYV). The segment covering 414 to 433 (STSSLSPSSSAVHHTSNHST) has biased composition (low complexity).

Belongs to the GLI C2H2-type zinc-finger protein family. In terms of tissue distribution, during early gastrula stages, widely expressed in the dorsal ectoderm. At mid-gastrula, expressed throughout the presumptive neural plate and at late gastrula, expression gradually diminishes in the dorsal midline and increases in the anterior folds. By early neurula stage, expression becomes restricted to the lateral edges of the neural plate, corresponding to the presumptive dorsal neural plate and neural crest, and in flanking ectoderm. In early tailbud stages (stages 22-23), expressed in the dorsal forebrain, midbrain and hindbrain. Subsequently expressed in the telencephalon and at the diencephalon/mesencephalon boundary. In the spinal cord, expression is restricted to the dorsal most region including the roof plate. Also expressed in the somites but not in eye vesicles. At larval stages, expressed mainly in the dorsal neural tube throughout its anteroposterior axis.

It localises to the nucleus. The protein resides in the cytoplasm. Functionally, transcriptional activator that induces expression of multiple genes including pax3, en2, snai2/slug, feb and a subset of wnt genes. Has multiple key roles in the regulation of neural induction and neurogenesis: acts as a neural competence factor, sensitizing the presumptive neuroectoderm to respond to subsequent neuralizing signals. Promotes both preplacodal cell fates and neural crest cell fates, two of the cell populations that arise from the neural plate border. Cooperates with pax3 in concert with wnt signaling to determine neural crest fate. Synergizes with the bmp-inhibitor noggin/nog and acts through the wnt pathway to induce expression of en2. May bind to the minimal GLI-consensus sequence 5'-TGGGTGGTC-3'. The protein is Zinc finger protein ZIC 1 (zic1) of Xenopus laevis (African clawed frog).